A 366-amino-acid chain; its full sequence is Pectinesterase A (366 aa).

The N-terminal stretch at 1 to 24 (MLKTISGTLALSLIIAASVHQAQA) is a signal peptide. Substrate is bound by residues Thr-109 and Gln-153. Asp-178 (proton donor) is an active-site residue. A disulfide bridge connects residues Cys-192 and Cys-212. The Nucleophile role is filled by Asp-199. Substrate-binding residues include Arg-219, Asn-226, Tyr-230, Arg-267, Trp-269, and Thr-272.

Belongs to the pectinesterase family. In terms of assembly, monomer.

The protein localises to the secreted. It carries out the reaction [(1-&gt;4)-alpha-D-galacturonosyl methyl ester](n) + n H2O = [(1-&gt;4)-alpha-D-galacturonosyl](n) + n methanol + n H(+). It functions in the pathway glycan metabolism; pectin degradation; 2-dehydro-3-deoxy-D-gluconate from pectin: step 1/5. Its function is as follows. Catalyzes the first step in maceration and soft-rotting of plant tissue. This is Pectinesterase A from Dickeya dadantii (strain 3937) (Erwinia chrysanthemi (strain 3937)).